The sequence spans 285 residues: Seipin (285 aa).

The Cytoplasmic segment spans residues Met-1 to Ser-16. A helical transmembrane segment spans residues Tyr-17 to Tyr-37. Residues His-38 to Arg-244 are Lumenal-facing. Residues Phe-245 to Ile-265 form a helical membrane-spanning segment. Residues Thr-266 to Ser-285 lie on the Cytoplasmic side of the membrane.

It belongs to the seipin family.

Its subcellular location is the endoplasmic reticulum membrane. Its function is as follows. Involved in lipid metabolism and lipid droplet (LD) morphology, number, and size. Facilitates initiation of LD formation, and ensures that vectorial budding of LDs from the ER is directed towards the cytoplasm. This is Seipin from Saccharomyces cerevisiae (strain ATCC 204508 / S288c) (Baker's yeast).